We begin with the raw amino-acid sequence, 155 residues long: Cytochrome c-type biogenesis protein CcmE (155 aa).

At 1 to 8 the chain is on the cytoplasmic side; the sequence is MHPKRKQR. Residues 9–29 traverse the membrane as a helical; Signal-anchor for type II membrane protein segment; sequence LILVLFVVLVSSVGVSLTLYA. Residues 30–155 lie on the Periplasmic side of the membrane; it reads LNENINLFYP…KTCKGISYDS (126 aa). Heme-binding residues include histidine 124 and tyrosine 128.

This sequence belongs to the CcmE/CycJ family.

Its subcellular location is the cell inner membrane. Heme chaperone required for the biogenesis of c-type cytochromes. Transiently binds heme delivered by CcmC and transfers the heme to apo-cytochromes in a process facilitated by CcmF and CcmH. In Teredinibacter turnerae (strain ATCC 39867 / T7901), this protein is Cytochrome c-type biogenesis protein CcmE.